A 529-amino-acid chain; its full sequence is Cytochrome P450 monooxygenase acuD (529 aa).

Residues 8-28 (FAVIAASAAAVAGVLFLIYAA) form a helical membrane-spanning segment. N-linked (GlcNAc...) asparagine glycosylation is present at N81. C449 serves as a coordination point for heme.

Belongs to the cytochrome P450 family. The cofactor is heme.

The protein localises to the endoplasmic reticulum membrane. The enzyme catalyses 3-hydroxybenzyl alcohol + reduced [NADPH--hemoprotein reductase] + O2 = gentisyl alcohol + oxidized [NADPH--hemoprotein reductase] + H2O + H(+). It functions in the pathway secondary metabolite biosynthesis. Cytochrome P450 monooxygenase; part of the gene cluster that mediates the biosynthesis of aculins. The pathway begins with the synthesis of 6-methylsalicylic acid by the polyketide synthase (PKS) acuA via condensation of acetate and malonate units. The 6-methylsalicylic acid decarboxylase acuB then catalyzes the decarboxylation of 6-methylsalicylic acid to yield m-cresol (also known as 3-methylphenol). These first reactions occur in the cytosol. The intermediate m-cresol is then transported into the endoplasmic reticulum where the cytochrome P450 monooxygenase acuC converts it to m-hydroxybenzyl alcohol, which is further converted to gentisyl alcohol by the cytochrome P450 monooxygenase acuD. Gentisyl alcohol is further oxidized by the oxidoreductase acuE that probably catalyzes hydroxylation of the aromatic ring. The aromatic system might then be opened by oxidation through a Baeyer-Villiger type of oxidation, which could be catalyzed by acuF, with the carboxylic acid at C-1 subsequently reduced to an aldehyde by acuG. Subsequently, a hemiacetal is formed, before the dehydrogenase acuH would reduce the double bond between C-4 and C-6. Finally, keto-enol tautomerism results in formation of aculinic acid, which exists as two diastereomers (both R/S configurations at C-1) by non-enzymatic hemiacetal formation. The carboxypeptidase acuI could be involved in the linking of aculinic acid to an aculene A moiety produced by the aculene biosynthesis cluster and which leads to the production of aculin A. AcuI may also be involved in the attachment of proline to aculinic acid to form epi-aculins A and B. The protein is Cytochrome P450 monooxygenase acuD of Aspergillus aculeatus (strain ATCC 16872 / CBS 172.66 / WB 5094).